Consider the following 360-residue polypeptide: Glutamate 5-kinase (360 aa).

Lys-11 serves as a coordination point for ATP. Residues Ser-51, Asp-138, and Asn-150 each coordinate substrate. Residues Lys-278–Tyr-356 form the PUA domain.

This sequence belongs to the glutamate 5-kinase family.

It is found in the cytoplasm. It catalyses the reaction L-glutamate + ATP = L-glutamyl 5-phosphate + ADP. The protein operates within amino-acid biosynthesis; L-proline biosynthesis; L-glutamate 5-semialdehyde from L-glutamate: step 1/2. Catalyzes the transfer of a phosphate group to glutamate to form L-glutamate 5-phosphate. This chain is Glutamate 5-kinase, found in Bacteroides thetaiotaomicron (strain ATCC 29148 / DSM 2079 / JCM 5827 / CCUG 10774 / NCTC 10582 / VPI-5482 / E50).